Here is a 518-residue protein sequence, read N- to C-terminus: Kelch repeat and BTB domain-containing protein 4 (518 aa).

The BTB domain occupies 45 to 112 (ADVTISVEGR…IYHGTVKLRA (68 aa)). The region spanning 147 to 239 (CLQVMWLADR…SLKEIGENVH (93 aa)) is the BACK domain. Kelch repeat units follow at residues 239–285 (HIYL…KHGG), 286–328 (DLYV…SVPG), 331–378 (AIYS…NLNG), 380–430 (IYLL…VHKD), and 432–481 (VFIV…VFRD).

In terms of assembly, component of the BCR(KBTBD4) E3 ubiquitin ligase complex, at least composed of CUL3, KBTBD4 and RBX1.

In terms of biological role, substrate-specific adapter of a BCR (BTB-CUL3-RBX1) E3 ubiquitin ligase complex which targets CoREST corepressor complex components RCOR1, KDM1A/LSD1 and HDAC2 for proteasomal degradation. RCOR1 is likely to be the primary target while degradation of KDM1A and HDAC2 is likely due to their association with RCOR1. Also targets RCOR3, MIER2 and MIER3 for proteasomal degradation as well as associated proteins ZNF217 and RREB1. Degradation is dependent on the presence of an ELM2 domain in the target proteins. This Pongo abelii (Sumatran orangutan) protein is Kelch repeat and BTB domain-containing protein 4 (KBTBD4).